The sequence spans 369 residues: Dual specificity protein phosphatase 1-A (369 aa).

In terms of domain architecture, Rhodanese spans arginine 21 to threonine 138. Residue threonine 168 is modified to Phosphothreonine; by MAPK1. The Tyrosine-protein phosphatase domain occupies glycine 175–alanine 316. Catalysis depends on cysteine 260, which acts as the Phosphocysteine intermediate.

The protein belongs to the protein-tyrosine phosphatase family. Non-receptor class dual specificity subfamily. Post-translationally, phosphorylated by MAPK1/ERK2 at Thr-168 and at one or more serine residues in a progesterone-dependent manner. Phosphorylation reduces its rate of degradation but does not seem to affect phosphatase activity. Expressed in XIK-2 kidney cells.

The protein resides in the nucleus. It catalyses the reaction O-phospho-L-seryl-[protein] + H2O = L-seryl-[protein] + phosphate. It carries out the reaction O-phospho-L-threonyl-[protein] + H2O = L-threonyl-[protein] + phosphate. The catalysed reaction is O-phospho-L-tyrosyl-[protein] + H2O = L-tyrosyl-[protein] + phosphate. Functionally, dual specificity phosphatase that dephosphorylates MAP kinase MAPK1/ERK2 on both 'Thr-188' and 'Tyr-190', regulating its activity during the meiotic cell cycle. This is Dual specificity protein phosphatase 1-A from Xenopus laevis (African clawed frog).